A 363-amino-acid chain; its full sequence is 3-isopropylmalate dehydrogenase (363 aa).

79-92 (GPKWEHLPPNDQPE) provides a ligand contact to NAD(+). Positions 100, 110, 139, and 228 each coordinate substrate. The Mg(2+) site is built by Asp228, Asp252, and Asp256. 286–298 (GSAPDIAGKNIAN) is an NAD(+) binding site.

This sequence belongs to the isocitrate and isopropylmalate dehydrogenases family. LeuB type 1 subfamily. Homodimer. The cofactor is Mg(2+). Mn(2+) is required as a cofactor.

Its subcellular location is the cytoplasm. It carries out the reaction (2R,3S)-3-isopropylmalate + NAD(+) = 4-methyl-2-oxopentanoate + CO2 + NADH. The protein operates within amino-acid biosynthesis; L-leucine biosynthesis; L-leucine from 3-methyl-2-oxobutanoate: step 3/4. Its function is as follows. Catalyzes the oxidation of 3-carboxy-2-hydroxy-4-methylpentanoate (3-isopropylmalate) to 3-carboxy-4-methyl-2-oxopentanoate. The product decarboxylates to 4-methyl-2 oxopentanoate. This chain is 3-isopropylmalate dehydrogenase, found in Vibrio parahaemolyticus serotype O3:K6 (strain RIMD 2210633).